The chain runs to 482 residues: Transcription termination/antitermination protein NusA (482 aa).

Positions 133–197 (NKVVIGYVQQ…NGIEVILSRT (65 aa)) constitute an S1 motif domain. Residues 300–446 (LHKALVVVSD…NDNDESMEKV (147 aa)) enclose the KH domain.

It belongs to the NusA family. As to quaternary structure, monomer. Binds directly to the core enzyme of the DNA-dependent RNA polymerase and to nascent RNA.

Its subcellular location is the cytoplasm. Participates in both transcription termination and antitermination. The chain is Transcription termination/antitermination protein NusA from Borreliella burgdorferi (strain ATCC 35210 / DSM 4680 / CIP 102532 / B31) (Borrelia burgdorferi).